The following is a 333-amino-acid chain: Serine proteinase inhibitor 2 (333 aa).

Belongs to the serpin family. Poxviruses subfamily.

The protein resides in the host cytoplasm. Weak inhibitor of the interleukin-1-beta converting enzyme (ICE) and of granzyme B. Does not form a stable complex with ICE, but can for a stable complex with granzyme B. The chain is Serine proteinase inhibitor 2 (SERP2) from Myxoma virus (strain Uriarra) (MYXV).